A 46-amino-acid polypeptide reads, in one-letter code: Protein PsbN (46 aa).

A helical membrane pass occupies residues 10-30 (LAIIVLVVLLGLTGLGVYMAF).

It belongs to the PsbN family.

Its subcellular location is the cellular thylakoid membrane. May play a role in photosystem I and II biogenesis. In Prochlorococcus marinus (strain MIT 9211), this protein is Protein PsbN.